The sequence spans 707 residues: MSPFLRIGLSNFDCGTCQACQGEAVNPYCAVLVKEYVESENGQMYIQKKPTMYPPWDSTFDAHINKGRVMQIIVKGKNVDLISETTVELYSLAERCRKNNGRTEIWLELKPQGRMLMNARYFLEMSDTKDMSEFENEGFFALHQRRGAIKQAKVHHVKCHEFTATFFPQPTFCSVCHEFVWGLNKQGYQCRQCNAAIHKKCIDKVIAKCTGSAINSRETMFHKERFKIDMPHRFKVYNYKSPTFCEHCGTLLWGLARQGLKCDACGMNVHHRCQTKVANLCGINQKLMAEALAMIESTQQARSLRDSEHIFREGPVEIGLPCSTKNETRPPCVPTPGKREPQGISWDSPLDGSNKSAGPPEPEVSMRRTSLQLKLKIDDFILHKMLGKGSFGKVFLAEFKRTNQFFAIKALKKDVVLMDDDVECTMVEKRVLSLAWEHPFLTHMFCTFQTKENLFFVMEYLNGGDLMYHIQSCHKFDLSRATFYAAEVILGLQFLHSKGIVYRDLKLDNILLDRDGHIKIADFGMCKENMLGDAKTNTFCGTPDYIAPEILLGQKYNHSVDWWSFGVLVYEMLIGQSPFHGQDEEELFHSIRMDNPFYPRWLEREAKDLLVKLFVREPEKRLGVRGDIRQHPLFREINWEELERKEIDPPFRPKVKSPYDCSNFDKEFLSEKPRLSFADRALINSMDQNMFSNFSFINPGMETLICS.

Residues 1-107 (MSPFLRIGLS…KNNGRTEIWL (107 aa)) enclose the C2 domain. Tyr-90 is modified (phosphotyrosine; by LCK). The segment at 159–209 (CHEFTATFFPQPTFCSVCHEFVWGLNKQGYQCRQCNAAIHKKCIDKVIAKC) adopts a Phorbol-ester/DAG-type 1 zinc-finger fold. Residue Thr-219 is modified to Phosphothreonine; by autocatalysis. The Phorbol-ester/DAG-type 2 zinc finger occupies 231–281 (PHRFKVYNYKSPTFCEHCGTLLWGLARQGLKCDACGMNVHHRCQTKVANLC). The interval 327-365 (ETRPPCVPTPGKREPQGISWDSPLDGSNKSAGPPEPEVS) is disordered. A Phosphoserine modification is found at Ser-348. Residues 380–634 (FILHKMLGKG…RGDIRQHPLF (255 aa)) enclose the Protein kinase domain. Residues 386-394 (LGKGSFGKV) and Lys-409 each bind ATP. Asp-504 (proton acceptor) is an active-site residue. Thr-538 carries the phosphothreonine; by PDPK1 modification. The 72-residue stretch at 635–706 (REINWEELER…INPGMETLIC (72 aa)) folds into the AGC-kinase C-terminal domain. Ser-676 carries the post-translational modification Phosphoserine; by autocatalysis. At Ser-685 the chain carries Phosphoserine. Ser-695 is subject to Phosphoserine; by autocatalysis.

This sequence belongs to the protein kinase superfamily. AGC Ser/Thr protein kinase family. PKC subfamily. Part of a membrane raft complex composed at least of BCL10, CARD11, MALT1 and IKBKB. Interacts with GLRX3 (via N-terminus). Interacts with ECT2. Interacts with CCDC88A/GIV; the interaction leads to phosphorylation of CCDC88A and inhibition of its guanine nucleotide exchange factor activity. Interacts with CD28. It depends on Mg(2+) as a cofactor. Post-translationally, autophosphorylation at Thr-219 is required for targeting to the TCR and cellular function of PRKCQ upon antigen receptor ligation. Following TCR stimulation, phosphorylated at Tyr-90 and Ser-685. T-lymphocytes and skeletal muscle.

The protein resides in the cytoplasm. It is found in the cell membrane. It catalyses the reaction L-seryl-[protein] + ATP = O-phospho-L-seryl-[protein] + ADP + H(+). It carries out the reaction L-threonyl-[protein] + ATP = O-phospho-L-threonyl-[protein] + ADP + H(+). Its activity is regulated as follows. Novel PKCs (PRKCD, PRKCE, PRKCH and PRKCQ) are calcium-insensitive, but activated by diacylglycerol (DAG) and phosphatidylserine. Three specific sites; Thr-538 (activation loop of the kinase domain), Ser-676 (turn motif) and Ser-695 (hydrophobic region), need to be phosphorylated for its full activation. Its function is as follows. Calcium-independent, phospholipid- and diacylglycerol (DAG)-dependent serine/threonine-protein kinase that mediates non-redundant functions in T-cell receptor (TCR) signaling, including T-cells activation, proliferation, differentiation and survival, by mediating activation of multiple transcription factors such as NF-kappa-B, JUN, NFATC1 and NFATC2. In TCR-CD3/CD28-co-stimulated T-cells, is required for the activation of NF-kappa-B and JUN, which in turn are essential for IL2 production, and participates in the calcium-dependent NFATC1 and NFATC2 transactivation. Mediates the activation of the canonical NF-kappa-B pathway (NFKB1) by direct phosphorylation of CARD11 on several serine residues, inducing CARD11 association with lipid rafts and recruitment of the BCL10-MALT1 complex, which then activates IKK complex, resulting in nuclear translocation and activation of NFKB1. May also play an indirect role in activation of the non-canonical NF-kappa-B (NFKB2) pathway. In the signaling pathway leading to JUN activation, acts by phosphorylating the mediator STK39/SPAK and may not act through MAP kinases signaling. Plays a critical role in TCR/CD28-induced NFATC1 and NFATC2 transactivation by participating in the regulation of reduced inositol 1,4,5-trisphosphate generation and intracellular calcium mobilization. After costimulation of T-cells through CD28 can phosphorylate CBLB and is required for the ubiquitination and subsequent degradation of CBLB, which is a prerequisite for the activation of TCR. During T-cells differentiation, plays an important role in the development of T-helper 2 (Th2) cells following immune and inflammatory responses, and, in the development of inflammatory autoimmune diseases, is necessary for the activation of IL17-producing Th17 cells. May play a minor role in Th1 response. Upon TCR stimulation, mediates T-cell protective survival signal by phosphorylating BAD, thus protecting T-cells from BAD-induced apoptosis, and by up-regulating BCL-X(L)/BCL2L1 levels through NF-kappa-B and JUN pathways. In platelets, regulates signal transduction downstream of the ITGA2B, CD36/GP4, F2R/PAR1 and F2RL3/PAR4 receptors, playing a positive role in 'outside-in' signaling and granule secretion signal transduction. May relay signals from the activated ITGA2B receptor by regulating the uncoupling of WASP and WIPF1, thereby permitting the regulation of actin filament nucleation and branching activity of the Arp2/3 complex. May mediate inhibitory effects of free fatty acids on insulin signaling by phosphorylating IRS1, which in turn blocks IRS1 tyrosine phosphorylation and downstream activation of the PI3K/AKT pathway. Phosphorylates MSN (moesin) in the presence of phosphatidylglycerol or phosphatidylinositol. Phosphorylates PDPK1 at 'Ser-504' and 'Ser-532' and negatively regulates its ability to phosphorylate PKB/AKT1. Phosphorylates CCDC88A/GIV and inhibits its guanine nucleotide exchange factor activity. Phosphorylates and activates LRRK1, which phosphorylates RAB proteins involved in intracellular trafficking. This is Protein kinase C theta type (Prkcq) from Mus musculus (Mouse).